A 513-amino-acid polypeptide reads, in one-letter code: Leucine-rich repeat-containing protein 24 (513 aa).

The signal sequence occupies residues 1–20 (MALRAPALLPLLLLLLPLRA). The LRRNT domain maps to 21–50 (AGCPAACRCYSATVECGALRLRVVPLGIPP). 6 LRR repeats span residues 51 to 72 (GTQT…ALAP), 75 to 96 (ALRR…AFRA), 99 to 120 (RLLE…AFVG), 123 to 144 (QLRV…TFLH), 147 to 168 (RLQE…ALAG), and 171 to 192 (SLAL…ALQP). In terms of domain architecture, LRRCT spans 204–259 (NPWRCDCALHWLGAWIKEGGQRLLTSRDRKIMCAEPPRLALQSLLDVSHSSLICIP). Residues 260-361 (PSVHVQPLEL…GAARVPFRLL (102 aa)) enclose the Ig-like C2-type domain. A disulfide bond links C281 and C345. Residues N334 and N363 are each glycosylated (N-linked (GlcNAc...) asparagine). Residues 365–391 (SRQQPQQPAQPPPPAARPAGSEPRPEA) are disordered. Residues 406–426 (AIAAAIALLALTALLLVAMIC) traverse the membrane as a helical segment.

The protein localises to the membrane. The protein is Leucine-rich repeat-containing protein 24 (LRRC24) of Homo sapiens (Human).